We begin with the raw amino-acid sequence, 266 residues long: Small ribosomal subunit protein uS2 (266 aa).

The interval 247-266 (EGENNYSNNRSWNKPERTNN) is disordered. The span at 249–258 (ENNYSNNRSW) shows a compositional bias: polar residues.

The protein belongs to the universal ribosomal protein uS2 family.

The chain is Small ribosomal subunit protein uS2 from Mesoplasma florum (strain ATCC 33453 / NBRC 100688 / NCTC 11704 / L1) (Acholeplasma florum).